Consider the following 202-residue polypeptide: Small ribosomal subunit protein uS4 (202 aa).

An S4 RNA-binding domain is found at 94-157 (SRLDSLVYRA…LEMPLIKNTL (64 aa)).

The protein belongs to the universal ribosomal protein uS4 family. Part of the 30S ribosomal subunit. Contacts protein S5. The interaction surface between S4 and S5 is involved in control of translational fidelity.

Functionally, one of the primary rRNA binding proteins, it binds directly to 16S rRNA where it nucleates assembly of the body of the 30S subunit. With S5 and S12 plays an important role in translational accuracy. This Ureaplasma urealyticum serovar 10 (strain ATCC 33699 / Western) protein is Small ribosomal subunit protein uS4.